A 710-amino-acid chain; its full sequence is Polyribonucleotide nucleotidyltransferase (710 aa).

The Mg(2+) site is built by Asp486 and Asp492. Residues 553-612 (PRFETIKIHPDKIRDIIGKGGATIRSITEETNSSIDIDDDGTVKVYADDNEALQAALNRI) enclose the KH domain. The S1 motif domain occupies 622-690 (GAIYEGTVVR…QRGRIKLSIK (69 aa)).

The protein belongs to the polyribonucleotide nucleotidyltransferase family. Component of the RNA degradosome, which is a multiprotein complex involved in RNA processing and mRNA degradation. It depends on Mg(2+) as a cofactor.

Its subcellular location is the cytoplasm. The enzyme catalyses RNA(n+1) + phosphate = RNA(n) + a ribonucleoside 5'-diphosphate. Functionally, involved in mRNA degradation. Catalyzes the phosphorolysis of single-stranded polyribonucleotides processively in the 3'- to 5'-direction. The chain is Polyribonucleotide nucleotidyltransferase from Cellvibrio japonicus (strain Ueda107) (Pseudomonas fluorescens subsp. cellulosa).